Consider the following 266-residue polypeptide: Trypsin 5G1 (266 aa).

Positions 1 to 18 (MTRIILILTATFFACALG) are cleaved as a signal peptide. The propeptide at 19–39 (ASTGGSHPLRPWWNALRSSGR) is activation peptide. Residues 40–265 (IVGGFEVPVE…VRDWVKEVSG (226 aa)) form the Peptidase S1 domain. A disulfide bridge connects residues C66 and C82. Active-site charge relay system residues include H81 and D125. 2 cysteine pairs are disulfide-bonded: C190–C206 and C217–C241. The Charge relay system role is filled by S221.

It belongs to the peptidase S1 family. As to expression, midgut.

It localises to the secreted. It is found in the extracellular space. It carries out the reaction Preferential cleavage: Arg-|-Xaa, Lys-|-Xaa.. Functionally, major function may be to aid in digestion of the blood meal. This chain is Trypsin 5G1, found in Aedes aegypti (Yellowfever mosquito).